The primary structure comprises 346 residues: KH domain-containing, RNA-binding, signal transduction-associated protein 3 (346 aa).

The interval 1-160 is involved in homodimerization; sequence MEEKYLPELM…IKKFLIPDYN (160 aa). Lysine 4 participates in a covalent cross-link: Glycyl lysine isopeptide (Lys-Gly) (interchain with G-Cter in SUMO2). The KH domain maps to 61 to 127; it reads LIPVKQFPKF…AKYFHLNDDL (67 aa). Disordered stretches follow at residues 212–266 and 317–346; these read RPVA…QETY and GQEE…YGRY. Over residues 253–262 the composition is skewed to pro residues; that stretch reads GYRPPPPPPT.

This sequence belongs to the KHDRBS family. In terms of assembly, self-associates to form homooligomers; dimerization increases RNA affinity. Interacts with KHDRBS2/SLM-1. Interacts with KHDRBS1/SAM68; heterooligomer formation of KHDRBS family proteins may modulate RNA substrate specificity. Interacts with the splicing regulatory proteins SFRS9, SAFB and YTHDC1. Interacts with HNRPL, RBMX, p85 subunit of PI3-kinase, SERPINB5. Phosphorylated on tyrosine residues by PTK6. In terms of tissue distribution, highly expressed in testis and brain. In adult cerebellum expressed predominantly in internal granular layer interneurons and in hippocampus is exclusively expressed in CA neurons; expression is restricted to neuronal subpopulations largely non-overlapping with expression of KHDRBS2/SLM-1.

It is found in the nucleus. Functionally, RNA-binding protein that plays a role in the regulation of alternative splicing and influences mRNA splice site selection and exon inclusion. Binds preferentially to the 5'-[AU]UAAA-3' motif in vitro. Binds optimally to RNA containing 5'-[AU]UAA-3' as a bipartite motif spaced by more than 15 nucleotides. Binds poly(A). RNA-binding abilities are down-regulated by tyrosine kinase PTK6. Involved in splice site selection of vascular endothelial growth factor. In vitro regulates CD44 alternative splicing by direct binding to purine-rich exonic enhancer. Can regulate alternative splicing of neurexins NRXN1-3 in the laminin G-like domain 6 containing the evolutionary conserved neurexin alternative spliced segment 4 (AS4) involved in neurexin selective targeting to postsynaptic partners such as neuroligins and LRRTM family members. High concentrations in forebrain structures block splicing inclusion of NRXN1-3 AS4 exons while low concentrations favor their inclusion. Targeted, cell-type specific splicing regulation of NRXN1 at AS4 is involved in neuronal glutamatergic synapse function and plasticity and is linked to behavioral aspects. Regulates expression of KHDRBS2/SLIM-1 in defined neuron populations in the hippocampus by modifying its alternative splicing resulting in a transcript predicted to undergo nonsense-mediated decay. Can bind FABP9 mRNA. May play a role as a negative regulator of cell growth. Inhibits cell proliferation. This is KH domain-containing, RNA-binding, signal transduction-associated protein 3 (Khdrbs3) from Mus musculus (Mouse).